The following is a 197-amino-acid chain: ATP-dependent Clp protease proteolytic subunit (197 aa).

The active-site Nucleophile is the Ser98. His123 is a catalytic residue.

The protein belongs to the peptidase S14 family. In terms of assembly, fourteen ClpP subunits assemble into 2 heptameric rings which stack back to back to give a disk-like structure with a central cavity, resembling the structure of eukaryotic proteasomes.

The protein resides in the cytoplasm. The catalysed reaction is Hydrolysis of proteins to small peptides in the presence of ATP and magnesium. alpha-casein is the usual test substrate. In the absence of ATP, only oligopeptides shorter than five residues are hydrolyzed (such as succinyl-Leu-Tyr-|-NHMec, and Leu-Tyr-Leu-|-Tyr-Trp, in which cleavage of the -Tyr-|-Leu- and -Tyr-|-Trp bonds also occurs).. Functionally, cleaves peptides in various proteins in a process that requires ATP hydrolysis. Has a chymotrypsin-like activity. Plays a major role in the degradation of misfolded proteins. This Pediococcus pentosaceus (strain ATCC 25745 / CCUG 21536 / LMG 10740 / 183-1w) protein is ATP-dependent Clp protease proteolytic subunit.